The chain runs to 318 residues: MDKKKGILLVALGTPRSCETEDVREYLKEFLGDPLVIQKPRWLWLPILNGIILKVRPQKSAEMYKQIWTDEGSPLMSYTIAQTEQLQGLREDFDVRFAMTYGEPRIDKVIREMKESGVEDITVLPLYPQYSLTTVEPIIQQVKKIDDKINVIRDFHQIESYTDLLAESIREKWQANHYDKLILSYHGIPLSYVTKKKDAYEAQCIETTRLFVEKLGLKEEEYEHTYQSKFGPEKWLEPATIDRIAELPKEDTKKVLICSPAFVADCLETLFELEIENKEVFVENGGETFDFVHPFNDSLEFTKVLSEVIEKNKVEVEV.

2 residues coordinate Fe(2+): H186 and E268.

The protein belongs to the ferrochelatase family.

It localises to the cytoplasm. It catalyses the reaction Fe-coproporphyrin III + 2 H(+) = coproporphyrin III + Fe(2+). It participates in porphyrin-containing compound metabolism; protoheme biosynthesis. Functionally, involved in coproporphyrin-dependent heme b biosynthesis. Catalyzes the insertion of ferrous iron into coproporphyrin III to form Fe-coproporphyrin III. This chain is Coproporphyrin III ferrochelatase, found in Lactococcus lactis subsp. cremoris (strain MG1363).